Consider the following 822-residue polypeptide: MEHHWGLITGNKEKVPLKSISVTLSINDFVAAVAATLHYENEEKVPIEAMFVFPMDEDSAVYSFEALVDGKKIVAELQDKTKAHSKYEEALSQGHQAYLLEEDDYSRDVFSCNVGNLQPGTKVAVTLRYVQELPLESDGALRYLLPAVLNPRYQLSEQSASSCLNVQKPIVPLEALPYTLSMVATITSQHGIERVQSNCSLSPIQYLTDDKTSAQVSLTEGHKFDRDVELLIYYREVHSPSVAVEKGMQDKKRDSLMGAPCAMVSFYPDIPEVNASKVCGEFVFLMDRSGSMQTPMRTEENSQLRIEAAKETLLLLLKSLPMGCYFNIYGFGSSYEQFFPESVKYTQETIEEAVERVKRLDADLGGTEILTPLRNIYKTSSIPGHPLQLFVFTDGEVSDTYSVIREVKLNSKKHRCFSFGIGQGASTSLIKNIARVSGGTAEFITGKDRMQAKALGSLKLALQCALDDISLSWELPPGLSVNMLSPEQPTIFRGQRLIIYAQLTGPMPQAESRGAVCLKHTLQGKSLENKVAFSLQPKENANFTIHRLAAKFLIQTKDLGSHEVSKEEKKDVMNISLQSGVLSSFTAFVAINKELNKPVQGPLAHRVIPRPMIATSTSMFMRSCSRLTGPFKNSRLKRRLCAADYVPYGHESTVYSSMPSPAPIENQGVADSSNEKSNSQNEHKAFGENVVLQLIFLQNANGSWKLDENLTKILGTTLEDTKAANPSQHGDPSAWATILAVLWLHANGQDLKCEWELLERKAVAWLHDHAGRGTTPPPFPSFHLHPREPCLYVLQRTQESLWLSQLCCLRTLSLQLILHFQD.

In terms of domain architecture, VIT spans 1 to 131 (MEHHWGLITG…KVAVTLRYVQ (131 aa)). The region spanning 281 to 469 (EFVFLMDRSG…LALQCALDDI (189 aa)) is the VWFA domain. The disordered stretch occupies residues 657–682 (SMPSPAPIENQGVADSSNEKSNSQNE). Positions 669 to 680 (VADSSNEKSNSQ) are enriched in polar residues.

In terms of biological role, may play a role in tumorigenesis as a tumor suppressor. Altered expression of this protein and disruption of the molecular pathway it is involved in may contribute directly to or modify tumorigenesis. This is von Willebrand factor A domain-containing protein 5A (Vwa5a) from Rattus norvegicus (Rat).